The following is a 395-amino-acid chain: S-adenosylmethionine synthase (395 aa).

Histidine 18 is an ATP binding site. Aspartate 20 serves as a coordination point for Mg(2+). Glutamate 46 is a binding site for K(+). Glutamate 59 and glutamine 103 together coordinate L-methionine. The flexible loop stretch occupies residues 103 to 113 (QSADIAVGVDS). ATP contacts are provided by residues 170-172 (DAK), 235-236 (KF), aspartate 244, 250-251 (RK), alanine 267, and lysine 271. Position 244 (aspartate 244) interacts with L-methionine. Lysine 275 contacts L-methionine.

The protein belongs to the AdoMet synthase family. As to quaternary structure, homotetramer; dimer of dimers. Mg(2+) is required as a cofactor. Requires K(+) as cofactor.

The protein resides in the cytoplasm. It carries out the reaction L-methionine + ATP + H2O = S-adenosyl-L-methionine + phosphate + diphosphate. Its pathway is amino-acid biosynthesis; S-adenosyl-L-methionine biosynthesis; S-adenosyl-L-methionine from L-methionine: step 1/1. In terms of biological role, catalyzes the formation of S-adenosylmethionine (AdoMet) from methionine and ATP. The overall synthetic reaction is composed of two sequential steps, AdoMet formation and the subsequent tripolyphosphate hydrolysis which occurs prior to release of AdoMet from the enzyme. The protein is S-adenosylmethionine synthase of Granulibacter bethesdensis (strain ATCC BAA-1260 / CGDNIH1).